Reading from the N-terminus, the 344-residue chain is Arginine N-succinyltransferase (344 aa).

L125 contacts succinyl-CoA. Catalysis depends on H229, which acts as the Proton donor.

This sequence belongs to the arginine N-succinyltransferase family.

The enzyme catalyses succinyl-CoA + L-arginine = N(2)-succinyl-L-arginine + CoA + H(+). Its pathway is amino-acid degradation; L-arginine degradation via AST pathway; L-glutamate and succinate from L-arginine: step 1/5. In terms of biological role, catalyzes the transfer of succinyl-CoA to arginine to produce N(2)-succinylarginine. In Escherichia coli O6:K15:H31 (strain 536 / UPEC), this protein is Arginine N-succinyltransferase.